A 513-amino-acid polypeptide reads, in one-letter code: MSEKLDLTRFEKKMVIRNIEEKDIDKIIDLQKDCFPGMEPWKREHLISHLEHFPEGQFCAEFEGEIIGSCSSLLINFDEYDDRHTWQDITDDGYITNHNPDGLNMYGIEVMVHPKYRRMKIGHRLYEARKDLARRLNLKSIIIGGRIPNYHKYAEEMTAREYVEQVTRHQIYDPVLSFQLMNGFTLMRINPNYLPDDTASIKYATLMEWNNVDYLPQQTKRYYKSAFPVRICVIQYEMKKIYSFEEFANQVEYYVDVASDARSDFAVFPEIFTTQLMSFLEERSPSLAVQRITEYTEDYISLFTDLAVKYNVNIIGGSHFVEEEGKIYNIAYLFRRDGTIEKQYKLHITPNERKWWGISAGDQVRVFDTDCGKIAIQICYDIEFPELARIAADKGAKIIFTPFCTEDRQGYLRVRYCSQARAVENQIYTVISGTVGNLPQTENMDIQYAQSGIFAPSDFEFARDGIVGETNPNIEMVVIGDVDLEILRRQRQNGTVRQLKDRRRDIYHIQYKK.

The region spanning 14-212 (MVIRNIEEKD…YATLMEWNNV (199 aa)) is the N-acetyltransferase domain. The CN hydrolase domain occupies 229 to 484 (VRICVIQYEM…EMVVIGDVDL (256 aa)). The active-site Proton acceptor is the E270. Catalysis depends on K345, which acts as the Proton donor. Residue C379 is the Nucleophile of the active site.

Belongs to the carbon-nitrogen hydrolase superfamily. NIT1/NIT2 family.

The chain is Probable hydrolase YhcX (yhcX) from Bacillus subtilis (strain 168).